Reading from the N-terminus, the 211-residue chain is FMN-dependent NADH:quinone oxidoreductase 2 (211 aa).

17–19 (SYS) serves as a coordination point for FMN.

The protein belongs to the azoreductase type 1 family. In terms of assembly, homodimer. Requires FMN as cofactor.

It carries out the reaction 2 a quinone + NADH + H(+) = 2 a 1,4-benzosemiquinone + NAD(+). The enzyme catalyses N,N-dimethyl-1,4-phenylenediamine + anthranilate + 2 NAD(+) = 2-(4-dimethylaminophenyl)diazenylbenzoate + 2 NADH + 2 H(+). In terms of biological role, quinone reductase that provides resistance to thiol-specific stress caused by electrophilic quinones. Also exhibits azoreductase activity. Catalyzes the reductive cleavage of the azo bond in aromatic azo compounds to the corresponding amines. This is FMN-dependent NADH:quinone oxidoreductase 2 from Bacillus licheniformis (strain ATCC 14580 / DSM 13 / JCM 2505 / CCUG 7422 / NBRC 12200 / NCIMB 9375 / NCTC 10341 / NRRL NRS-1264 / Gibson 46).